We begin with the raw amino-acid sequence, 376 residues long: TelA-like protein SERP0976 (376 aa).

Belongs to the TelA family.

The sequence is that of TelA-like protein SERP0976 from Staphylococcus epidermidis (strain ATCC 35984 / DSM 28319 / BCRC 17069 / CCUG 31568 / BM 3577 / RP62A).